A 433-amino-acid polypeptide reads, in one-letter code: Serine--tRNA ligase (433 aa).

235-237 (TSE) contributes to the L-serine binding site. Position 266–268 (266–268 (RSE)) interacts with ATP. Residue Glu-289 coordinates L-serine. ATP is bound at residue 353-356 (EISS). L-serine is bound at residue Ser-388.

This sequence belongs to the class-II aminoacyl-tRNA synthetase family. Type-1 seryl-tRNA synthetase subfamily. As to quaternary structure, homodimer. The tRNA molecule binds across the dimer.

Its subcellular location is the cytoplasm. It carries out the reaction tRNA(Ser) + L-serine + ATP = L-seryl-tRNA(Ser) + AMP + diphosphate + H(+). The catalysed reaction is tRNA(Sec) + L-serine + ATP = L-seryl-tRNA(Sec) + AMP + diphosphate + H(+). The protein operates within aminoacyl-tRNA biosynthesis; selenocysteinyl-tRNA(Sec) biosynthesis; L-seryl-tRNA(Sec) from L-serine and tRNA(Sec): step 1/1. Catalyzes the attachment of serine to tRNA(Ser). Is also able to aminoacylate tRNA(Sec) with serine, to form the misacylated tRNA L-seryl-tRNA(Sec), which will be further converted into selenocysteinyl-tRNA(Sec). The chain is Serine--tRNA ligase from Burkholderia orbicola (strain MC0-3).